Reading from the N-terminus, the 209-residue chain is Large ribosomal subunit protein uL3 (209 aa).

Gln-150 is subject to N5-methylglutamine.

It belongs to the universal ribosomal protein uL3 family. Part of the 50S ribosomal subunit. Forms a cluster with proteins L14 and L19. In terms of processing, methylated by PrmB.

Its function is as follows. One of the primary rRNA binding proteins, it binds directly near the 3'-end of the 23S rRNA, where it nucleates assembly of the 50S subunit. The sequence is that of Large ribosomal subunit protein uL3 from Photobacterium profundum (strain SS9).